The primary structure comprises 417 residues: Probable glucuronosyltransferase GUT1 (417 aa).

The Cytoplasmic segment spans residues 1–15; it reads MGTRRRSARARARPP. A helical; Signal-anchor for type II membrane protein membrane pass occupies residues 16–36; sequence LAMPLAVLLLFACSSGVAAAA. Topologically, residues 37-417 are lumenal; that stretch reads AQGIERIKDD…EGTREDLKPW (381 aa). N-linked (GlcNAc...) asparagine glycans are attached at residues asparagine 144 and asparagine 405.

The protein belongs to the glycosyltransferase 47 family.

It is found in the golgi apparatus membrane. In terms of biological role, involved in the synthesis of glucuronoxylan hemicellulose in secondary cell walls. The sequence is that of Probable glucuronosyltransferase GUT1 (GUT1) from Oryza sativa subsp. japonica (Rice).